The sequence spans 330 residues: NADH-quinone oxidoreductase subunit H (330 aa).

Transmembrane regions (helical) follow at residues 3-23 (AAFV…FSAL), 76-96 (PVFM…MAAI), 118-138 (VGLL…LLAG), 161-181 (EVVT…ISLV), 188-208 (AGGM…LFLI), 244-264 (FFIG…LIFL), 272-292 (FIPG…LFLW), and 307-327 (WLCW…TGIV).

The protein belongs to the complex I subunit 1 family. NDH-1 is composed of 14 different subunits. Subunits NuoA, H, J, K, L, M, N constitute the membrane sector of the complex.

It is found in the cell inner membrane. It catalyses the reaction a quinone + NADH + 5 H(+)(in) = a quinol + NAD(+) + 4 H(+)(out). In terms of biological role, NDH-1 shuttles electrons from NADH, via FMN and iron-sulfur (Fe-S) centers, to quinones in the respiratory chain. The immediate electron acceptor for the enzyme in this species is believed to be ubiquinone. Couples the redox reaction to proton translocation (for every two electrons transferred, four hydrogen ions are translocated across the cytoplasmic membrane), and thus conserves the redox energy in a proton gradient. This subunit may bind ubiquinone. In Nitratiruptor sp. (strain SB155-2), this protein is NADH-quinone oxidoreductase subunit H.